A 208-amino-acid chain; its full sequence is Thymidylate kinase (208 aa).

10–17 serves as a coordination point for ATP; the sequence is GGEGAGKS.

Belongs to the thymidylate kinase family.

It catalyses the reaction dTMP + ATP = dTDP + ADP. Phosphorylation of dTMP to form dTDP in both de novo and salvage pathways of dTTP synthesis. This chain is Thymidylate kinase, found in Alcanivorax borkumensis (strain ATCC 700651 / DSM 11573 / NCIMB 13689 / SK2).